A 429-amino-acid polypeptide reads, in one-letter code: Glutamate-1-semialdehyde 2,1-aminomutase 1 (429 aa).

K267 is subject to N6-(pyridoxal phosphate)lysine.

It belongs to the class-III pyridoxal-phosphate-dependent aminotransferase family. HemL subfamily. As to quaternary structure, homodimer. Pyridoxal 5'-phosphate is required as a cofactor.

It localises to the cytoplasm. It catalyses the reaction (S)-4-amino-5-oxopentanoate = 5-aminolevulinate. Its pathway is porphyrin-containing compound metabolism; protoporphyrin-IX biosynthesis; 5-aminolevulinate from L-glutamyl-tRNA(Glu): step 2/2. This is Glutamate-1-semialdehyde 2,1-aminomutase 1 from Staphylococcus carnosus (strain TM300).